Reading from the N-terminus, the 507-residue chain is Lysine--tRNA ligase (507 aa).

The Mg(2+) site is built by Glu-416 and Glu-423.

Belongs to the class-II aminoacyl-tRNA synthetase family. As to quaternary structure, homodimer. It depends on Mg(2+) as a cofactor.

Its subcellular location is the cytoplasm. The catalysed reaction is tRNA(Lys) + L-lysine + ATP = L-lysyl-tRNA(Lys) + AMP + diphosphate. The polypeptide is Lysine--tRNA ligase (Hahella chejuensis (strain KCTC 2396)).